Reading from the N-terminus, the 308-residue chain is GTP cyclohydrolase FolE2 (308 aa).

Belongs to the GTP cyclohydrolase IV family.

The catalysed reaction is GTP + H2O = 7,8-dihydroneopterin 3'-triphosphate + formate + H(+). It functions in the pathway cofactor biosynthesis; 7,8-dihydroneopterin triphosphate biosynthesis; 7,8-dihydroneopterin triphosphate from GTP: step 1/1. Its function is as follows. Converts GTP to 7,8-dihydroneopterin triphosphate. The sequence is that of GTP cyclohydrolase FolE2 from Colwellia psychrerythraea (strain 34H / ATCC BAA-681) (Vibrio psychroerythus).